A 318-amino-acid chain; its full sequence is Aspartate carbamoyltransferase catalytic subunit (318 aa).

Positions 59 and 60 each coordinate carbamoyl phosphate. L-aspartate is bound at residue lysine 87. Carbamoyl phosphate is bound by residues arginine 109, histidine 137, and glutamine 140. Residues arginine 170 and arginine 224 each coordinate L-aspartate. Carbamoyl phosphate is bound by residues glycine 265 and proline 266.

Belongs to the aspartate/ornithine carbamoyltransferase superfamily. ATCase family. As to quaternary structure, heterododecamer (2C3:3R2) of six catalytic PyrB chains organized as two trimers (C3), and six regulatory PyrI chains organized as three dimers (R2).

It catalyses the reaction carbamoyl phosphate + L-aspartate = N-carbamoyl-L-aspartate + phosphate + H(+). It participates in pyrimidine metabolism; UMP biosynthesis via de novo pathway; (S)-dihydroorotate from bicarbonate: step 2/3. Its function is as follows. Catalyzes the condensation of carbamoyl phosphate and aspartate to form carbamoyl aspartate and inorganic phosphate, the committed step in the de novo pyrimidine nucleotide biosynthesis pathway. The polypeptide is Aspartate carbamoyltransferase catalytic subunit (Rhizobium etli (strain CIAT 652)).